We begin with the raw amino-acid sequence, 578 residues long: uncharacterized protein (578 aa).

This is an uncharacterized protein from Ostreid herpesvirus 1 (isolate France) (OsHV-1).